The following is a 40-amino-acid chain: Photosystem II reaction center protein J (40 aa).

Residues 8 to 28 form a helical membrane-spanning segment; the sequence is IPLWLVGTVTGIPVIGLIGVF.

It belongs to the PsbJ family. PSII is composed of 1 copy each of membrane proteins PsbA, PsbB, PsbC, PsbD, PsbE, PsbF, PsbH, PsbI, PsbJ, PsbK, PsbL, PsbM, PsbT, PsbX, PsbY, PsbZ, Psb30/Ycf12, at least 3 peripheral proteins of the oxygen-evolving complex and a large number of cofactors. It forms dimeric complexes.

Its subcellular location is the plastid. It is found in the chloroplast thylakoid membrane. Its function is as follows. One of the components of the core complex of photosystem II (PSII). PSII is a light-driven water:plastoquinone oxidoreductase that uses light energy to abstract electrons from H(2)O, generating O(2) and a proton gradient subsequently used for ATP formation. It consists of a core antenna complex that captures photons, and an electron transfer chain that converts photonic excitation into a charge separation. The chain is Photosystem II reaction center protein J from Musa acuminata (Banana).